A 152-amino-acid chain; its full sequence is uncharacterized protein (152 aa).

This is an uncharacterized protein from Methanocaldococcus jannaschii (strain ATCC 43067 / DSM 2661 / JAL-1 / JCM 10045 / NBRC 100440) (Methanococcus jannaschii).